The chain runs to 105 residues: Large ribosomal subunit protein uL24 (105 aa).

It belongs to the universal ribosomal protein uL24 family. In terms of assembly, part of the 50S ribosomal subunit.

Functionally, one of two assembly initiator proteins, it binds directly to the 5'-end of the 23S rRNA, where it nucleates assembly of the 50S subunit. In terms of biological role, one of the proteins that surrounds the polypeptide exit tunnel on the outside of the subunit. The protein is Large ribosomal subunit protein uL24 of Thermotoga maritima (strain ATCC 43589 / DSM 3109 / JCM 10099 / NBRC 100826 / MSB8).